The chain runs to 437 residues: 3-phosphoshikimate 1-carboxyvinyltransferase (437 aa).

Residues lysine 28, serine 29, and arginine 33 each contribute to the 3-phosphoshikimate site. Lysine 28 is a phosphoenolpyruvate binding site. Glycine 97 and arginine 125 together coordinate phosphoenolpyruvate. 5 residues coordinate 3-phosphoshikimate: serine 168, serine 169, glutamine 170, glutamate 316, and histidine 343. Phosphoenolpyruvate is bound at residue glutamine 170. Glutamate 316 (proton acceptor) is an active-site residue. Phosphoenolpyruvate contacts are provided by arginine 347, arginine 388, and lysine 413.

The protein belongs to the EPSP synthase family. As to quaternary structure, monomer.

The protein localises to the cytoplasm. The catalysed reaction is 3-phosphoshikimate + phosphoenolpyruvate = 5-O-(1-carboxyvinyl)-3-phosphoshikimate + phosphate. It functions in the pathway metabolic intermediate biosynthesis; chorismate biosynthesis; chorismate from D-erythrose 4-phosphate and phosphoenolpyruvate: step 6/7. In terms of biological role, catalyzes the transfer of the enolpyruvyl moiety of phosphoenolpyruvate (PEP) to the 5-hydroxyl of shikimate-3-phosphate (S3P) to produce enolpyruvyl shikimate-3-phosphate and inorganic phosphate. This Rhodococcus erythropolis (strain PR4 / NBRC 100887) protein is 3-phosphoshikimate 1-carboxyvinyltransferase.